Here is a 104-residue protein sequence, read N- to C-terminus: NADH-quinone oxidoreductase subunit K (104 aa).

3 consecutive transmembrane segments (helical) span residues 4-24, 31-51, and 64-84; these read VPLS…LYGA, VIVL…LVAF, and IFAL…LAIL.

It belongs to the complex I subunit 4L family. In terms of assembly, NDH-1 is composed of 14 different subunits. Subunits NuoA, H, J, K, L, M, N constitute the membrane sector of the complex.

It localises to the cell membrane. It carries out the reaction a quinone + NADH + 5 H(+)(in) = a quinol + NAD(+) + 4 H(+)(out). NDH-1 shuttles electrons from NADH, via FMN and iron-sulfur (Fe-S) centers, to quinones in the respiratory chain. The immediate electron acceptor for the enzyme in this species is believed to be a menaquinone. Couples the redox reaction to proton translocation (for every two electrons transferred, four hydrogen ions are translocated across the cytoplasmic membrane), and thus conserves the redox energy in a proton gradient. The chain is NADH-quinone oxidoreductase subunit K from Geobacillus sp. (strain WCH70).